Consider the following 331-residue polypeptide: dTDP-glucose 4,6-dehydratase (331 aa).

NAD(+) is bound by residues 11-12 (FI), 33-36 (DALT), 57-58 (DI), 77-81 (FAAET), and S96. Residue T81 coordinates substrate. T120 is a binding site for substrate. D121 serves as the catalytic Proton donor. Catalysis depends on proton acceptor residues E122 and Y147. An NAD(+)-binding site is contributed by 147 to 151 (YSSTK). N176 lines the substrate pocket. N177 serves as a coordination point for NAD(+). Substrate-binding positions include 186–191 (KFIPRQ), 202–204 (KLY), R211, N246, and 269–273 (DRAGH).

The protein belongs to the NAD(P)-dependent epimerase/dehydratase family. dTDP-glucose dehydratase subfamily. As to quaternary structure, homodimer. It depends on NAD(+) as a cofactor.

It catalyses the reaction dTDP-alpha-D-glucose = dTDP-4-dehydro-6-deoxy-alpha-D-glucose + H2O. It functions in the pathway carbohydrate biosynthesis; dTDP-L-rhamnose biosynthesis. In terms of biological role, catalyzes the dehydration of dTDP-D-glucose to form dTDP-6-deoxy-D-xylo-4-hexulose via a three-step process involving oxidation, dehydration and reduction. Involved in the biosynthesis of the dTDP-L-rhamnose which is a component of the critical linker, D-N-acetylglucosamine-L-rhamnose disaccharide, which connects the galactan region of arabinogalactan to peptidoglycan via a phosphodiester linkage. This Mycolicibacterium smegmatis (strain ATCC 700084 / mc(2)155) (Mycobacterium smegmatis) protein is dTDP-glucose 4,6-dehydratase (rmlB).